The sequence spans 221 residues: U1 small nuclear ribonucleoprotein C (221 aa).

Residues 4 to 36 (YFCDYCDTYLTHDSPSVRKTHCNGRKHKENVRV) form a Matrin-type zinc finger. The tract at residues 100–168 (SNPFPTSQAG…PPGAPTLPQP (69 aa)) is disordered. Residues 134 to 166 (APAPPRMPGPLLMTPPPGAAAPGMAPPGAPTLP) are compositionally biased toward pro residues.

This sequence belongs to the U1 small nuclear ribonucleoprotein C family. In terms of assembly, U1 snRNP is composed of the 7 core Sm proteins B/B', D1, D2, D3, E, F and G that assemble in a heptameric protein ring on the Sm site of the small nuclear RNA to form the core snRNP, and at least 3 U1 snRNP-specific proteins U1-70K, U1-A and U1-C. U1-C interacts with U1 snRNA and the 5' splice-site region of the pre-mRNA.

Its subcellular location is the nucleus. Component of the spliceosomal U1 snRNP, which is essential for recognition of the pre-mRNA 5' splice-site and the subsequent assembly of the spliceosome. U1-C is directly involved in initial 5' splice-site recognition for both constitutive and regulated alternative splicing. The interaction with the 5' splice-site seems to precede base-pairing between the pre-mRNA and the U1 snRNA. Stimulates commitment or early (E) complex formation by stabilizing the base pairing of the 5' end of the U1 snRNA and the 5' splice-site region. The polypeptide is U1 small nuclear ribonucleoprotein C (Branchiostoma floridae (Florida lancelet)).